The sequence spans 181 residues: Interleukin-24 (181 aa).

The first 26 residues, 1–26, serve as a signal peptide directing secretion; that stretch reads MSWGLQILPCLSLILLLWNQVPGLEG. Cys-34 and Cys-81 are joined by a disulfide. The N-linked (GlcNAc...) asparagine glycan is linked to Asn-74. Lys-97 is covalently cross-linked (Glycyl lysine isopeptide (Lys-Gly) (interchain with G-Cter in ubiquitin)).

This sequence belongs to the IL-10 family. Glycosylated. Post-translationally, ubiquitination at Lys-97 promotes proteasomal degradation. In terms of tissue distribution, selectively expressed by Th2 cells. Expressed in the liver.

It localises to the secreted. Functionally, multifunctional cytokine mainly produced by T-cells that plays a regulatory role in immune response, tissue homeostasis, host defense, and oncogenesis. Possesses antiviral functions and induces the type I interferon response during influenza infection. Signals through two receptor complexes IL20RA/IL20RB or IL20RB/IL22RA1. In turn, stimulates the JAK1-STAT3 and MAPK pathways and promotes the secretion of pro-inflammatory mediators including IL8 and MMP1. Intracellularly, maintains endoplasmic reticulum homeostasis by restricting the eIF2alpha-CHOP pathway-mediated stress signal. In addition, acts as a quality control mechanism for the ubiquitin proteasome system by alerting the cell to proteasome dysfunction through activation of PKR/EIF2AK2. The sequence is that of Interleukin-24 (Il24) from Mus musculus (Mouse).